The sequence spans 601 residues: Arginine--tRNA ligase (601 aa).

Residues 135 to 145 carry the 'HIGH' region motif; the sequence is ANPTGPLHLGH.

The protein belongs to the class-I aminoacyl-tRNA synthetase family. In terms of assembly, monomer.

It is found in the cytoplasm. It catalyses the reaction tRNA(Arg) + L-arginine + ATP = L-arginyl-tRNA(Arg) + AMP + diphosphate. The chain is Arginine--tRNA ligase from Gloeobacter violaceus (strain ATCC 29082 / PCC 7421).